A 244-amino-acid chain; its full sequence is Krueppel-like factor 9 (244 aa).

Disordered regions lie at residues 26 to 51 (EHGGAPEAERLRLPEREVTKEHGDPG) and 79 to 143 (PSVC…EKRH). Residues 32–51 (EAERLRLPEREVTKEHGDPG) are compositionally biased toward basic and acidic residues. The residue at position 122 (S122) is a Phosphoserine. Residues 134–143 (KGKHASEKRH) are compositionally biased toward basic residues. C2H2-type zinc fingers lie at residues 143–167 (HKCPYSGCGKVYGKSSHLKAHYRVH), 173–197 (FPCTWPDCLKKFSRSDELTRHYRTH), and 203–225 (FRCPLCEKRFMRSDHLTKHARRH).

The protein belongs to the Sp1 C2H2-type zinc-finger protein family. Interacts with ZZEF1.

Its subcellular location is the nucleus. Functionally, transcription factor that binds to GC box promoter elements. Selectively activates mRNA synthesis from genes containing tandem repeats of GC boxes but represses genes with a single GC box. Acts as an epidermal circadian transcription factor regulating keratinocyte proliferation. The protein is Krueppel-like factor 9 (Klf9) of Mus musculus (Mouse).